Consider the following 654-residue polypeptide: Protein fem-1 homolog A (654 aa).

ANK repeat units follow at residues aspartate 2–isoleucine 31, glycine 40–alanine 70, glutamate 82–arginine 111, threonine 115–valine 145, histidine 149–arginine 178, lysine 182–arginine 211, and tyrosine 214–glutamine 243. Serine 108 is subject to Phosphoserine. The segment at histidine 241–proline 265 is disordered. Polar residues predominate over residues glycine 253–serine 263. TPR repeat units follow at residues valine 283–glycine 317 and serine 375–asparagine 408. ANK repeat units lie at residues asparagine 519–serine 561 and aspartate 565–alanine 594. At serine 608 the chain carries Phosphoserine.

This sequence belongs to the fem-1 family. As to quaternary structure, component of a CRL2 E3 ubiquitin-protein ligase complex, also named ECS (Elongin BC-CUL2/5-SOCS-box protein) complex, composed of CUL2, Elongin BC (ELOB and ELOC), RBX1 and substrate-specific adapter FEM1A. Interacts with PTGER4. Interacts with NFKB1; the interaction is direct. Phosphorylated; highly phosphorylated in myoblasts and myotubes. Phosphorylation at Ser-108 and Ser-608 promote PGE2-EP4-mediated inhibition of inflammation. Dephosphorylated by protein phosphatase 2A (PP2A).

The protein resides in the mitochondrion. It is found in the cytoplasm. Its pathway is protein modification; protein ubiquitination. In terms of biological role, substrate-recognition component of a Cul2-RING (CRL2) E3 ubiquitin-protein ligase complex of the DesCEND (destruction via C-end degrons) pathway, which recognizes a C-degron located at the extreme C terminus of target proteins, leading to their ubiquitination and degradation. The C-degron recognized by the DesCEND pathway is usually a motif of less than ten residues and can be present in full-length proteins, truncated proteins or proteolytically cleaved forms. The CRL2(FEM1A) complex specifically recognizes proteins with an arginine at the C-terminus: recognizes and binds proteins ending with -Lys/Arg-Xaa-Arg and -Lys/Arg-Xaa-Xaa-Arg C-degrons, such as SIL1 or OR51B2, leading to their ubiquitination and degradation. Involved in PGE2-EP4-mediated inhibition of inflammation of macrophages via interaction with NFKB1 and PTGER4. Promotes inflammation in brain microglia through MAP2K4/MKK4-mediated signaling. This Rattus norvegicus (Rat) protein is Protein fem-1 homolog A.